Reading from the N-terminus, the 469-residue chain is Coiled-coil domain-containing protein 6 (469 aa).

Acidic residues predominate over residues Met1–Thr10. The tract at residues Met1 to Gly37 is disordered. Ala2 is modified (N-acetylalanine). Phosphoserine is present on Ser45. Residues Phe47–Ser320 are a coiled coil. 3 consecutive repeat copies span residues Glu99–Tyr127, Glu128–Leu156, and Glu157–Leu185. The tract at residues Glu99–Leu228 is 5 X 29 AA tandem repeats. Residues Glu186–Leu199 form a 4; approximate repeat. Copy 5 of the repeat occupies Glu200–Leu228. 6 positions are modified to phosphoserine: Ser233, Ser237, Ser242, Ser247, Ser277, and Ser316. The tract at residues Ala335–Gly362 is disordered. Thr342 carries the phosphothreonine modification. The span at Ser344–Pro361 shows a compositional bias: low complexity. A phosphoserine mark is found at Ser356 and Ser360. An Omega-N-methylarginine modification is found at Arg380. 2 positions are modified to phosphoserine: Ser388 and Ser406. Residues Gln394–Pro469 are disordered. The segment covering Pro419 to Pro444 has biased composition (pro residues). Positions Pro435–Pro444 match the SH3-binding motif. Residues Gln460–Pro469 show a composition bias toward low complexity.

Its subcellular location is the cytoplasm. The protein resides in the cytoskeleton. This Mus musculus (Mouse) protein is Coiled-coil domain-containing protein 6 (Ccdc6).